Consider the following 185-residue polypeptide: Anaphase-promoting complex subunit 10 (185 aa).

The residue at position 2 (Thr-2) is an N-acetylthreonine. The region spanning 2-185 (TTPNKTPPGA…IDFMMYRSIR (184 aa)) is the DOC domain. Lys-169 carries the N6-acetyllysine modification.

Belongs to the APC10 family. In terms of assembly, the mammalian APC/C is composed at least of 14 distinct subunits ANAPC1, ANAPC2, CDC27/APC3, ANAPC4, ANAPC5, CDC16/APC6, ANAPC7, CDC23/APC8, ANAPC10, ANAPC11, CDC26/APC12, ANAPC13, ANAPC15 and ANAPC16 that assemble into a complex of at least 19 chains with a combined molecular mass of around 1.2 MDa; APC/C interacts with FZR1 and FBXO5. The C-terminus of APC10 binds to CDC27/APC3. Interacts with PIWIL1; interaction only takes place when PIWIL1 binds piRNA. Interacts with FBXO43; the interaction is direct.

It participates in protein modification; protein ubiquitination. Its function is as follows. Component of the anaphase promoting complex/cyclosome (APC/C), a cell cycle-regulated E3 ubiquitin ligase that controls progression through mitosis and the G1 phase of the cell cycle. The APC/C complex acts by mediating ubiquitination and subsequent degradation of target proteins: it mainly mediates the formation of 'Lys-11'-linked polyubiquitin chains and, to a lower extent, the formation of 'Lys-48'- and 'Lys-63'-linked polyubiquitin chains. The APC/C complex catalyzes assembly of branched 'Lys-11'-/'Lys-48'-linked branched ubiquitin chains on target proteins. This Mus musculus (Mouse) protein is Anaphase-promoting complex subunit 10 (Anapc10).